The following is a 323-amino-acid chain: DNA repair and recombination protein RadA (323 aa).

114–121 serves as a coordination point for ATP; it reads GEFGSGKT.

This sequence belongs to the eukaryotic RecA-like protein family.

Functionally, involved in DNA repair and in homologous recombination. Binds and assemble on single-stranded DNA to form a nucleoprotein filament. Hydrolyzes ATP in a ssDNA-dependent manner and promotes DNA strand exchange between homologous DNA molecules. The polypeptide is DNA repair and recombination protein RadA (Picrophilus torridus (strain ATCC 700027 / DSM 9790 / JCM 10055 / NBRC 100828 / KAW 2/3)).